Reading from the N-terminus, the 765-residue chain is LPS-assembly protein LptD (765 aa).

Positions Met-1–Ala-18 are cleaved as a signal peptide.

This sequence belongs to the LptD family. As to quaternary structure, component of the lipopolysaccharide transport and assembly complex. Interacts with LptE and LptA.

The protein localises to the cell outer membrane. Its function is as follows. Together with LptE, is involved in the assembly of lipopolysaccharide (LPS) at the surface of the outer membrane. The polypeptide is LPS-assembly protein LptD (Shewanella oneidensis (strain ATCC 700550 / JCM 31522 / CIP 106686 / LMG 19005 / NCIMB 14063 / MR-1)).